We begin with the raw amino-acid sequence, 322 residues long: Epiphycan (322 aa).

The signal sequence occupies residues M1–T19. Residue T60 is glycosylated (O-linked (GalNAc...) threonine). S64 carries O-linked (Xyl...) (dermatan sulfate) serine glycosylation. The segment at S64–P101 is disordered. O-linked (GalNAc...) serine glycosylation is present at S96. Residues V106 to K143 form the LRRNT domain. A disulfide bridge connects residues C118 and C130. 5 LRR repeats span residues N144–S165, D168–K189, Q192–L213, D238–E258, and N259–N280. C279 and C312 form a disulfide bridge. N-linked (GlcNAc...) asparagine glycans are attached at residues N283 and N302. The LRR 6 repeat unit spans residues A290–Y310.

It belongs to the small leucine-rich proteoglycan (SLRP) family. SLRP class III subfamily. In terms of processing, the O-linked polysaccharides on Thr-60 and Ser-96 are probably the mucin type linked to GalNAc. There is one glycosaminoglycan chain, known to be dermatan sulfate, and it is probably the O-glycosylation at Ser-64. Cartilage, ligament, and placenta.

The protein resides in the secreted. Its subcellular location is the extracellular space. The protein localises to the extracellular matrix. May have a role in bone formation and also in establishing the ordered structure of cartilage through matrix organization. This is Epiphycan (EPYC) from Homo sapiens (Human).